The sequence spans 231 residues: Nitrate reductase [NAD(P)H] (231 aa).

The FAD-binding FR-type domain maps to 1-85; that stretch reads PQKLGLPVGR…KGPHRHIEYT (85 aa). Residues 25–28, 42–46, Phe-47, 59–61, and Thr-112 each bind FAD; these read RAYT, LIKIY, and LMS.

This sequence belongs to the nitrate reductase family. Homodimer. FAD serves as cofactor. Heme is required as a cofactor. The cofactor is Mo-molybdopterin.

The catalysed reaction is nitrite + NAD(+) + H2O = nitrate + NADH + H(+). The enzyme catalyses nitrite + NADP(+) + H2O = nitrate + NADPH + H(+). Its function is as follows. Nitrate reductase is a key enzyme involved in the first step of nitrate assimilation in plants, fungi and bacteria. The sequence is that of Nitrate reductase [NAD(P)H] (NAR) from Zea mays (Maize).